A 930-amino-acid chain; its full sequence is Xanthan lyase (930 aa).

The first 25 residues, 1–25 (MLSGILIAALLMTLWGGWQPDIAHA), serve as a signal peptide directing secretion. Residues 146–148 (NWW), His-246, Tyr-255, Arg-309, 313–315 (RSY), and Asn-424 contribute to the xanthan site. Catalysis depends on Tyr-255, which acts as the Proton donor/acceptor. Ca(2+) is bound by residues Asp-515, Asp-516, and Glu-517. A xanthan-binding site is contributed by Arg-612. Glu-676 provides a ligand contact to Ca(2+).

It belongs to the polysaccharide lyase 8 family. As to quaternary structure, monomer.

Its subcellular location is the secreted. The catalysed reaction is Eliminative cleavage of the terminal beta-D-mannosyl-(1-&gt;4)-beta-D-glucuronosyl linkage of the side-chain of the polysaccharide xanthan, leaving a 4-deoxy-alpha-L-threo-hex-4-enuronosyl group at the terminus of the side-chain.. Its activity is regulated as follows. Activated by Co(2+) at 1 mM. Completely inhibited by Hg(2+) but not affected by other divalent cations. Intensely inhibited by NaCl and KCl at 150 mM, in particular by the Na(+) and K(+) ions but not the Cl(-) ions. Partially inhibited by iodoacetamide and N-ethylmaleimide at 1 mM but not by dithiothreitol, reduced glutathione or 2-mercaptoethanol. Plays a role in xanthan depolymerization pathway by cleaving the linkage between the terminal mannosyl and glucuronyl residues of the side chain of xanthan to liberate pyruvylated mannose. Is highly specific for pyruvylated side-chains of xanthan and is not effective with hyaluronate, chondroitin A, gellan, heparin or pectin. The sequence is that of Xanthan lyase from Bacillus sp. (strain GL1).